A 505-amino-acid polypeptide reads, in one-letter code: Glutamate--tRNA ligase (505 aa).

The 'HIGH' region signature appears at 16–26 (PSPTGFPHVGT). Positions 257 to 261 (KLSKR) match the 'KMSKS' region motif. K260 serves as a coordination point for ATP.

It belongs to the class-I aminoacyl-tRNA synthetase family. Glutamate--tRNA ligase type 1 subfamily. In terms of assembly, monomer.

It is found in the cytoplasm. It carries out the reaction tRNA(Glu) + L-glutamate + ATP = L-glutamyl-tRNA(Glu) + AMP + diphosphate. Its function is as follows. Catalyzes the attachment of glutamate to tRNA(Glu) in a two-step reaction: glutamate is first activated by ATP to form Glu-AMP and then transferred to the acceptor end of tRNA(Glu). The polypeptide is Glutamate--tRNA ligase (Psychrobacter sp. (strain PRwf-1)).